Here is a 306-residue protein sequence, read N- to C-terminus: Arylesterase (306 aa).

An Involved in the stabilization of the negatively charged intermediate by the formation of the oxyanion hole motif is present at residues His82–Gly84. Catalysis depends on residues Ser156, Asp251, and His281.

As to quaternary structure, monomer.

It catalyses the reaction a phenyl acetate + H2O = a phenol + acetate + H(+). It carries out the reaction An aryl dialkyl phosphate + H2O = dialkyl phosphate + an aryl alcohol.. With respect to regulation, completely inhibited by chemical modifiers that are specific to Cys (HgCl(2) and p-chloromercuribenzoic acid), His (diethyl pyrocarbonate) and Ser (diisopropyl fluorophosphate and phenylmethanesulfonyl fluoride). No significant effect with chemical modifiers specific to Lys (pyridoxal 5'-phosphate) and Arg (phenylglyoxal). Not inhibited by inhibitors of A-esterases (paraoxon) or C-esterases (physostigmine/eserine). Activity is also not effected by incubation with 5 mM divalent cations for 30 minutes at 30 degrees Celsius or with 10 mM EDTA for 60 minutes at 75 degrees Celsius. In terms of biological role, has a broad substrate specificity. Hydrolyzes various p-nitrophenyl phosphates, aromatic esters and p-nitrophenyl fatty acids in vitro. Most active against paraoxon, phenyl acetate and p-nitrophenyl caproate (C6), respectively. Also has tributyrinase activity, but shows no hydrolytic activity toward other triacylglycerols including tricaprylin, trimyristin, tripalmitin or triolein in vitro. This Saccharolobus solfataricus (Sulfolobus solfataricus) protein is Arylesterase.